The sequence spans 100 residues: MAKKNMIQREIKREKLEKKYYLKRLAIKEQLKKTTSFAEKIELRQKLQEMPRNSAPVRSRNRCWLTGRSRGYYRDFGLSRHVFREMSHECLLPGVTKSSW.

Belongs to the universal ribosomal protein uS14 family. Part of the 30S ribosomal subunit.

The protein resides in the plastid. It is found in the chloroplast. In terms of biological role, binds 16S rRNA, required for the assembly of 30S particles. The chain is Small ribosomal subunit protein uS14c from Porphyra purpurea (Red seaweed).